A 120-amino-acid polypeptide reads, in one-letter code: Cytochrome c oxidase subunit 5 (120 aa).

Ser-2 bears the Blocked amino end (Ser) mark. The Zn(2+) site is built by Cys-76, His-84, Cys-99, and Cys-102.

Belongs to the cytochrome c oxidase subunit 5B family. In terms of assembly, component of the cytochrome c oxidase (complex IV, CIV), a multisubunit enzyme composed of a catalytic core of 3 subunits and several supernumerary subunits. The complex exists as a monomer or a dimer and forms supercomplexes (SCs) in the inner mitochondrial membrane with ubiquinol-cytochrome c oxidoreductase (cytochrome b-c1 complex, complex III, CIII). Slime mold cytochrome c oxidase consists of at least seven different polypeptides species, subunits I, II, III, IV, V, VI, and VIIe/s in order of MW.

Its subcellular location is the mitochondrion inner membrane. The protein operates within energy metabolism; oxidative phosphorylation. Component of the cytochrome c oxidase, the last enzyme in the mitochondrial electron transport chain which drives oxidative phosphorylation. The respiratory chain contains 3 multisubunit complexes succinate dehydrogenase (complex II, CII), ubiquinol-cytochrome c oxidoreductase (cytochrome b-c1 complex, complex III, CIII) and cytochrome c oxidase (complex IV, CIV), that cooperate to transfer electrons derived from NADH and succinate to molecular oxygen, creating an electrochemical gradient over the inner membrane that drives transmembrane transport and the ATP synthase. Cytochrome c oxidase is the component of the respiratory chain that catalyzes the reduction of oxygen to water. Electrons originating from reduced cytochrome c in the intermembrane space (IMS) are transferred via the dinuclear copper A center (CU(A)) of subunit 2 and heme A of subunit 1 to the active site in subunit 1, a binuclear center (BNC) formed by heme A3 and copper B (CU(B)). The BNC reduces molecular oxygen to 2 water molecules using 4 electrons from cytochrome c in the IMS and 4 protons from the mitochondrial matrix. This chain is Cytochrome c oxidase subunit 5 (cxeA), found in Dictyostelium discoideum (Social amoeba).